The chain runs to 374 residues: Acetylxylan esterase (374 aa).

The first 22 residues, 1-22, serve as a signal peptide directing secretion; it reads MVFSPRLSAFVALVALTNAATA. Residues 23–57 form the CBM1 domain; it reads VPMYGQCGGSGYTGPTQCDPGLVCVKLNDWYSQCQ. The segment at 58–99 is ser/Thr/Pro-rich linker; the sequence is SGGAQPPVTTTSSPPVTVSPPPSTTTVAPPVATGPPAPEIPA. Residues 60–86 are disordered; sequence GAQPPVTTTSSPPVTVSPPPSTTTVAP. The span at 63–73 shows a compositional bias: low complexity; that stretch reads PPVTTTSSPPV. Positions 100–374 are catalytic; the sequence is GQLTQLRSFG…EVVAMDFFGL (275 aa). The N-linked (GlcNAc...) asparagine glycan is linked to N114. The Charge relay system role is filled by S219. N320 is a glycosylation site (N-linked (GlcNAc...) asparagine).

It belongs to the carbohydrate esterase 1 (CE1) family. AxeA subfamily. Monomer. In terms of processing, glycosylated.

It localises to the secreted. It carries out the reaction Deacetylation of xylans and xylo-oligosaccharides.. The protein operates within glycan degradation; xylan degradation. Acetylxylan esterase involved in the hydrolysis of xylan, a major structural heterogeneous polysaccharide found in plant biomass representing the second most abundant polysaccharide in the biosphere, after cellulose. Degrades acetylated xylans by cleaving acetyl side groups from the hetero-xylan backbone. The polypeptide is Acetylxylan esterase (Coprinopsis cinerea (strain Okayama-7 / 130 / ATCC MYA-4618 / FGSC 9003) (Inky cap fungus)).